A 206-amino-acid chain; its full sequence is Large ribosomal subunit protein uL4 (206 aa).

A disordered region spans residues 49–76; the sequence is QSAKTRTEVRGGGIKPWRQKGTGRARQG.

The protein belongs to the universal ribosomal protein uL4 family. Part of the 50S ribosomal subunit.

In terms of biological role, one of the primary rRNA binding proteins, this protein initially binds near the 5'-end of the 23S rRNA. It is important during the early stages of 50S assembly. It makes multiple contacts with different domains of the 23S rRNA in the assembled 50S subunit and ribosome. Functionally, forms part of the polypeptide exit tunnel. This Clostridium botulinum (strain Alaska E43 / Type E3) protein is Large ribosomal subunit protein uL4.